The sequence spans 372 residues: tRNA-specific 2-thiouridylase MnmA (372 aa).

Residues 16–23 and methionine 42 each bind ATP; that span reads GMSGGVDS. The segment at 102–104 is interaction with target base in tRNA; the sequence is NPD. The active-site Nucleophile is the cysteine 107. Cysteine 107 and cysteine 205 form a disulfide bridge. Glycine 132 lines the ATP pocket. The tract at residues 155 to 157 is interaction with tRNA; the sequence is KDQ. Catalysis depends on cysteine 205, which acts as the Cysteine persulfide intermediate. Positions 317–318 are interaction with tRNA; the sequence is RY.

It belongs to the MnmA/TRMU family.

It localises to the cytoplasm. The catalysed reaction is S-sulfanyl-L-cysteinyl-[protein] + uridine(34) in tRNA + AH2 + ATP = 2-thiouridine(34) in tRNA + L-cysteinyl-[protein] + A + AMP + diphosphate + H(+). Catalyzes the 2-thiolation of uridine at the wobble position (U34) of tRNA, leading to the formation of s(2)U34. The polypeptide is tRNA-specific 2-thiouridylase MnmA (Shewanella sp. (strain MR-4)).